A 447-amino-acid chain; its full sequence is Adenylosuccinate synthetase (447 aa).

GTP is bound by residues 12–18 (GDEGKGK) and 40–42 (GHT). The Proton acceptor role is filled by Asp-13. Positions 13 and 40 each coordinate Mg(2+). IMP contacts are provided by residues 13–16 (DEGK), 38–41 (NAGH), Thr-128, Arg-142, Gln-223, Thr-238, and Arg-302. Residue His-41 is the Proton donor of the active site. 298–304 (TTTGRKR) is a substrate binding site. Residues Arg-304, 330–332 (KLD), and 412–414 (SLG) each bind GTP.

The protein belongs to the adenylosuccinate synthetase family. Homodimer. It depends on Mg(2+) as a cofactor.

It is found in the cytoplasm. The enzyme catalyses IMP + L-aspartate + GTP = N(6)-(1,2-dicarboxyethyl)-AMP + GDP + phosphate + 2 H(+). It functions in the pathway purine metabolism; AMP biosynthesis via de novo pathway; AMP from IMP: step 1/2. Functionally, plays an important role in the de novo pathway of purine nucleotide biosynthesis. Catalyzes the first committed step in the biosynthesis of AMP from IMP. The polypeptide is Adenylosuccinate synthetase (Nostoc punctiforme (strain ATCC 29133 / PCC 73102)).